Here is a 550-residue protein sequence, read N- to C-terminus: MTGDKGPQRLSGSSYGSISSPTSPTSPGPQQAPPRETYLSEKIPIPDTKPGTFSLRKLWAFTGPGFLMSIAFLDPGNIESDLQAGAVAGFKLLWVLLWATVLGLLCQRLAARLGVVTGKDLGEVCHLYYPKVPRTVLWLTIELAIVGSDMQEVIGTAIAFNLLSAGRIPLWGGVLITIVDTFFFLFLDNYGLRKLEAFFGLLITIMALTFGYEYVVARPEQGALLRGLFLPSCPGCGHPELLQAVGIVGAIIMPHNIYLHSALVKSREIDRARRADIREANMYFLIEATIALSVSFIINLFVMAVFGQAFYQKTNQAAFNICANSSLHDYAKIFPMNNATVAVDIYQGGVILGCLFGPAALYIWAIGLLAAGQSSTMTGTYAGQFVMEGFLRLRWSRFARVLLTRSCAILPTVLVAVFRDLRDLSGLNDLLNVLQSLLLPFAVLPILTFTSMPTLMQEFANGLLNKVVTSSIMVLVCAINLYFVVSYLPSLPHPAYFGLAALLAAAYLGLSTYLVWTCCLAHGATFLAHSSHHHFLYGLLEEDQKGETSG.

The disordered stretch occupies residues 1 to 45 (MTGDKGPQRLSGSSYGSISSPTSPTSPGPQQAPPRETYLSEKIPI). At 1–58 (MTGDKGPQRLSGSSYGSISSPTSPTSPGPQQAPPRETYLSEKIPIPDTKPGTFSLRKL) the chain is on the cytoplasmic side. Residues 11 to 23 (SGSSYGSISSPTS) show a composition bias toward low complexity. The chain crosses the membrane as a helical span at residues 59 to 76 (WAFTGPGFLMSIAFLDPG). Residues 77–85 (NIESDLQAG) are Extracellular-facing. The chain crosses the membrane as a helical span at residues 86–105 (AVAGFKLLWVLLWATVLGLL). The Cytoplasmic portion of the chain corresponds to 106-142 (CQRLAARLGVVTGKDLGEVCHLYYPKVPRTVLWLTIE). Residues 143 to 163 (LAIVGSDMQEVIGTAIAFNLL) form a helical membrane-spanning segment. Residues 164-167 (SAGR) are Extracellular-facing. The chain crosses the membrane as a helical span at residues 168–187 (IPLWGGVLITIVDTFFFLFL). Topologically, residues 188–196 (DNYGLRKLE) are cytoplasmic. The chain crosses the membrane as a helical span at residues 197–217 (AFFGLLITIMALTFGYEYVVA). Topologically, residues 218–240 (RPEQGALLRGLFLPSCPGCGHPE) are extracellular. A helical membrane pass occupies residues 241-259 (LLQAVGIVGAIIMPHNIYL). Over 260-287 (HSALVKSREIDRARRADIREANMYFLIE) the chain is Cytoplasmic. The chain crosses the membrane as a helical span at residues 288 to 307 (ATIALSVSFIINLFVMAVFG). Residues 308-349 (QAFYQKTNQAAFNICANSSLHDYAKIFPMNNATVAVDIYQGG) lie on the Extracellular side of the membrane. Residues Asn324 and Asn338 are each glycosylated (N-linked (GlcNAc...) asparagine). The helical transmembrane segment at 350–369 (VILGCLFGPAALYIWAIGLL) threads the bilayer. Residues 370–400 (AAGQSSTMTGTYAGQFVMEGFLRLRWSRFAR) are Cytoplasmic-facing. The helical transmembrane segment at 401-418 (VLLTRSCAILPTVLVAVF) threads the bilayer. At 419–429 (RDLRDLSGLND) the chain is on the extracellular side. A helical membrane pass occupies residues 430-450 (LLNVLQSLLLPFAVLPILTFT). Over 451-466 (SMPTLMQEFANGLLNK) the chain is Cytoplasmic. A helical membrane pass occupies residues 467 to 488 (VVTSSIMVLVCAINLYFVVSYL). The Extracellular portion of the chain corresponds to 489-496 (PSLPHPAY). Residues 497–516 (FGLAALLAAAYLGLSTYLVW) form a helical membrane-spanning segment. Over 517–550 (TCCLAHGATFLAHSSHHHFLYGLLEEDQKGETSG) the chain is Cytoplasmic.

This sequence belongs to the NRAMP family. Macrophages; peripheral blood leukocytes, lung, spleen and liver.

It is found in the late endosome membrane. Its subcellular location is the lysosome membrane. It catalyses the reaction Zn(2+)(in) + H(+)(out) = Zn(2+)(out) + H(+)(in). The catalysed reaction is Fe(2+)(in) + H(+)(out) = Fe(2+)(out) + H(+)(in). It carries out the reaction Mn(2+)(in) + H(+)(out) = Mn(2+)(out) + H(+)(in). Macrophage-specific antiporter that fluxes metal ions in either direction against a proton gradient. Localized to late endosomal lysosomal membranes, delivers bivalent cations from the cytosol into these acidic compartments where they may directly affect antimicrobial activity. Involved in iron metabolism and host natural resistance to infection with intracellular parasites. Pathogen resistance involves sequestration of Fe(2+) and Mn(2+), cofactors of both prokaryotic and eukaryotic catalases and superoxide dismutases, not only to protect the macrophage against its own generation of reactive oxygen species, but to deny the cations to the pathogen for synthesis of its protective enzymes. The polypeptide is Natural resistance-associated macrophage protein 1 (Homo sapiens (Human)).